The sequence spans 184 residues: Large ribosomal subunit protein uL22 (184 aa).

The protein belongs to the universal ribosomal protein uL22 family.

This Yarrowia lipolytica (strain CLIB 122 / E 150) (Yeast) protein is Large ribosomal subunit protein uL22 (RPL17).